The primary structure comprises 226 residues: ATP synthase F(0) complex subunit a (226 aa).

Helical transmembrane passes span 11–31 (APSMMGLPIVVLIVMFPSILF), 68–88 (WALMLMSLILFIGSTNLLGLL), 97–117 (QLSMNLGMAIPLWAGTVITGF), 138–158 (IPMLVVIETISLFIQPMALAV), 164–184 (ITAGHLLIHLIGGATLALINI), and 189–209 (AFITFIILILLTILEFAVALI).

Belongs to the ATPase A chain family. In terms of assembly, component of the ATP synthase complex composed at least of ATP5F1A/subunit alpha, ATP5F1B/subunit beta, ATP5MC1/subunit c (homooctomer), MT-ATP6/subunit a, MT-ATP8/subunit 8, ATP5ME/subunit e, ATP5MF/subunit f, ATP5MG/subunit g, ATP5MK/subunit k, ATP5MJ/subunit j, ATP5F1C/subunit gamma, ATP5F1D/subunit delta, ATP5F1E/subunit epsilon, ATP5PF/subunit F6, ATP5PB/subunit b, ATP5PD/subunit d, ATP5PO/subunit OSCP. ATP synthase complex consists of a soluble F(1) head domain (subunits alpha(3) and beta(3)) - the catalytic core - and a membrane F(0) domain - the membrane proton channel (subunits c, a, 8, e, f, g, k and j). These two domains are linked by a central stalk (subunits gamma, delta, and epsilon) rotating inside the F1 region and a stationary peripheral stalk (subunits F6, b, d, and OSCP). Interacts with DNAJC30; interaction is direct.

Its subcellular location is the mitochondrion inner membrane. It carries out the reaction H(+)(in) = H(+)(out). Functionally, subunit a, of the mitochondrial membrane ATP synthase complex (F(1)F(0) ATP synthase or Complex V) that produces ATP from ADP in the presence of a proton gradient across the membrane which is generated by electron transport complexes of the respiratory chain. ATP synthase complex consist of a soluble F(1) head domain - the catalytic core - and a membrane F(1) domain - the membrane proton channel. These two domains are linked by a central stalk rotating inside the F(1) region and a stationary peripheral stalk. During catalysis, ATP synthesis in the catalytic domain of F(1) is coupled via a rotary mechanism of the central stalk subunits to proton translocation. With the subunit c (ATP5MC1), forms the proton-conducting channel in the F(0) domain, that contains two crucial half-channels (inlet and outlet) that facilitate proton movement from the mitochondrial intermembrane space (IMS) into the matrix. Protons are taken up via the inlet half-channel and released through the outlet half-channel, following a Grotthuss mechanism. This Canis lupus familiaris (Dog) protein is ATP synthase F(0) complex subunit a.